The sequence spans 247 residues: 2,3-bisphosphoglycerate-dependent phosphoglycerate mutase (247 aa).

Substrate contacts are provided by residues 8 to 15 (RHGESQWN), 21 to 22 (TG), arginine 60, 87 to 90 (ERHY), lysine 98, 114 to 115 (RR), and 183 to 184 (GN). Histidine 9 functions as the Tele-phosphohistidine intermediate in the catalytic mechanism. The active-site Proton donor/acceptor is glutamate 87.

This sequence belongs to the phosphoglycerate mutase family. BPG-dependent PGAM subfamily.

It carries out the reaction (2R)-2-phosphoglycerate = (2R)-3-phosphoglycerate. It functions in the pathway carbohydrate degradation; glycolysis; pyruvate from D-glyceraldehyde 3-phosphate: step 3/5. In terms of biological role, catalyzes the interconversion of 2-phosphoglycerate and 3-phosphoglycerate. This is 2,3-bisphosphoglycerate-dependent phosphoglycerate mutase from Chlorobium phaeobacteroides (strain BS1).